Here is a 229-residue protein sequence, read N- to C-terminus: Cytochrome c oxidase subunit 2 (229 aa).

The Mitochondrial intermembrane portion of the chain corresponds to 1–26 (MSTWANLGLQDSASPLMEQLIFFHDH). A helical membrane pass occupies residues 27–48 (ALLILVMITVLVGYLMVMLFFN). Residues 49–62 (SYVNRFLLHGQLIE) are Mitochondrial matrix-facing. Residues 63–82 (MIWTILPAIILLFIAMPSLR) traverse the membrane as a helical segment. Topologically, residues 83–229 (LLYLLDEINE…IKWISDKVNS (147 aa)) are mitochondrial intermembrane. Cu cation contacts are provided by His-161, Cys-196, Glu-198, Cys-200, His-204, and Met-207. Glu-198 lines the Mg(2+) pocket.

This sequence belongs to the cytochrome c oxidase subunit 2 family. In terms of assembly, component of the cytochrome c oxidase (complex IV, CIV), a multisubunit enzyme composed of a catalytic core of 3 subunits and several supernumerary subunits. The complex exists as a monomer or a dimer and forms supercomplexes (SCs) in the inner mitochondrial membrane with ubiquinol-cytochrome c oxidoreductase (cytochrome b-c1 complex, complex III, CIII). Requires Cu cation as cofactor.

Its subcellular location is the mitochondrion inner membrane. The enzyme catalyses 4 Fe(II)-[cytochrome c] + O2 + 8 H(+)(in) = 4 Fe(III)-[cytochrome c] + 2 H2O + 4 H(+)(out). Functionally, component of the cytochrome c oxidase, the last enzyme in the mitochondrial electron transport chain which drives oxidative phosphorylation. The respiratory chain contains 3 multisubunit complexes succinate dehydrogenase (complex II, CII), ubiquinol-cytochrome c oxidoreductase (cytochrome b-c1 complex, complex III, CIII) and cytochrome c oxidase (complex IV, CIV), that cooperate to transfer electrons derived from NADH and succinate to molecular oxygen, creating an electrochemical gradient over the inner membrane that drives transmembrane transport and the ATP synthase. Cytochrome c oxidase is the component of the respiratory chain that catalyzes the reduction of oxygen to water. Electrons originating from reduced cytochrome c in the intermembrane space (IMS) are transferred via the dinuclear copper A center (CU(A)) of subunit 2 and heme A of subunit 1 to the active site in subunit 1, a binuclear center (BNC) formed by heme A3 and copper B (CU(B)). The BNC reduces molecular oxygen to 2 water molecules using 4 electrons from cytochrome c in the IMS and 4 protons from the mitochondrial matrix. The chain is Cytochrome c oxidase subunit 2 (mt:CoII) from Drosophila subobscura (Fruit fly).